The primary structure comprises 491 residues: Probable allantoate deiminase (491 aa).

The signal sequence occupies residues 1 to 32 (MALLLSYPRRHPSIHLLILSAYALFLLPILDG). An N-linked (GlcNAc...) asparagine glycan is attached at Asn-109. 4 residues coordinate Mn(2+): His-120, Asp-131, Glu-168, and His-234. N-linked (GlcNAc...) asparagine glycosylation is found at Asn-265 and Asn-343. His-454 contacts Mn(2+).

Belongs to the peptidase M20A family. Homodimer. Mn(2+) is required as a cofactor.

It is found in the endoplasmic reticulum. It carries out the reaction allantoate + H2O + 2 H(+) = (S)-2-ureidoglycine + NH4(+) + CO2. Its function is as follows. Involved in the catabolism of purine nucleotides. The sequential activity of AAH, UGLYAH and UAH allows a complete purine breakdown without the intermediate generation of urea. This chain is Probable allantoate deiminase, found in Oryza sativa subsp. japonica (Rice).